Here is a 234-residue protein sequence, read N- to C-terminus: Nitroreductase NfnB (234 aa).

25–29 (RRAVR) is an FMN binding site. 4 residues coordinate NADP(+): Ser55, Arg105, Tyr113, and Ile118. FMN-binding positions include Tyr137, 181 to 182 (AL), and Arg223.

It belongs to the nitroreductase family. Homodimer. It depends on FMN as a cofactor.

In terms of biological role, confers resistance to antitubercular drugs benzothiazinone (BTZ) and dinitrobenzamide (DNB). Inactivates BTZ and DNB by reducing an essential nitro group of these compounds to amino group or to hydroxyl amine, respectively, using NADH or NADPH as source of reducing equivalents; two electrons are transferred. Able to reduce the nitro group of bicyclic nitroimidazole PA-824, but not of quinone menadione, nitrofurazone, methyl-4-nitrobenzoate, 4-nitrobenzene methyl sulfonate or 4-nitroacetophenone. This chain is Nitroreductase NfnB, found in Mycolicibacterium smegmatis (strain ATCC 700084 / mc(2)155) (Mycobacterium smegmatis).